The chain runs to 391 residues: S-adenosylmethionine synthase (391 aa).

An ATP-binding site is contributed by His-16. Asp-18 contacts Mg(2+). Glu-44 is a binding site for K(+). Positions 57 and 101 each coordinate L-methionine. Positions 101-111 are flexible loop; that stretch reads QSADIAQGVDA. ATP contacts are provided by residues 166–168, Asp-244, 250–251, Ala-267, and Lys-271; these read DAK and RK. Asp-244 serves as a coordination point for L-methionine. Lys-275 is a binding site for L-methionine.

This sequence belongs to the AdoMet synthase family. As to quaternary structure, homotetramer; dimer of dimers. It depends on Mg(2+) as a cofactor. K(+) serves as cofactor.

The protein resides in the cytoplasm. It catalyses the reaction L-methionine + ATP + H2O = S-adenosyl-L-methionine + phosphate + diphosphate. The protein operates within amino-acid biosynthesis; S-adenosyl-L-methionine biosynthesis; S-adenosyl-L-methionine from L-methionine: step 1/1. Catalyzes the formation of S-adenosylmethionine (AdoMet) from methionine and ATP. The overall synthetic reaction is composed of two sequential steps, AdoMet formation and the subsequent tripolyphosphate hydrolysis which occurs prior to release of AdoMet from the enzyme. The sequence is that of S-adenosylmethionine synthase from Zymomonas mobilis subsp. mobilis (strain ATCC 31821 / ZM4 / CP4).